Reading from the N-terminus, the 422-residue chain is 5-hydroxytryptamine receptor 1A (422 aa).

A disordered region spans residues 1 to 23 (MDVLSPGQGNNTTSPPAPFETGG). Topologically, residues 1 to 38 (MDVLSPGQGNNTTSPPAPFETGGNTTGISDVTFSYQVI) are extracellular. 3 N-linked (GlcNAc...) asparagine glycosylation sites follow: Asn10, Asn11, and Asn24. The helical transmembrane segment at 39–59 (TSLLLGTLIFCAVLGNACVVA) threads the bilayer. Over 60 to 73 (AIALERSLQNVANY) the chain is Cytoplasmic. A helical transmembrane segment spans residues 74 to 98 (LIGSLAVTDLMVSVLVLPMAALYQV). Over 99–107 (LNKWTLGQV) the chain is Extracellular. Residues 108–132 (TCDLFIALDVLCCTSSILHLCAIAL) traverse the membrane as a helical segment. Cys109 and Cys187 are joined by a disulfide. Asp116 and Cys120 together coordinate serotonin. The DRY motif; important for ligand-induced conformation changes motif lies at 133–135 (DRY). The Cytoplasmic portion of the chain corresponds to 133–152 (DRYWAITDPIDYVNKRTPRR). Residues 153-174 (AAALISLTWLIGFLISIPPMLG) form a helical membrane-spanning segment. Topologically, residues 175–193 (WRTPEDRSDPDACTISKDH) are extracellular. A helical membrane pass occupies residues 194 to 216 (GYTIYSTFGAFYIPLLLMLVLYG). At 217-346 (RIFRAARFRI…LARERKTVKT (130 aa)) the chain is on the cytoplasmic side. Residues 235–263 (KTGADTHHGASPAPQPKKSVNGESGSRNW) are disordered. 1D-myo-inositol 4-phosphate-binding residues include Thr314, Lys345, Thr346, and Gly352. Residues 347–370 (LGIIMGTFILCWLPFFIVALVLPF) traverse the membrane as a helical segment. At 371-378 (CESSCHMP) the chain is on the extracellular side. Residues 379 to 403 (TLLGAIINWLGYSNSLLNPVIYAYF) form a helical membrane-spanning segment. The NPxxY motif; important for ligand-induced conformation changes and signaling signature appears at 396–400 (NPVIY). Residues Phe403, Asn404, and Lys405 each coordinate 1D-myo-inositol 4-phosphate. The Cytoplasmic portion of the chain corresponds to 404 to 422 (NKDFQNAFKKIIKCKFCRQ).

This sequence belongs to the G-protein coupled receptor 1 family. 5-hydroxytryptamine receptor subfamily. HTR1A sub-subfamily. Heterodimer; heterodimerizes with GPER1. Interacts with YIF1B. Interacts with GPR39 and GALR1.

The protein localises to the cell membrane. The protein resides in the cell projection. It is found in the dendrite. Its activity is regulated as follows. G-protein coupled receptor activity is regulated by lipids: phosphatidylinositol 4-phosphate increases HTR1A-mediated activity. Functionally, G-protein coupled receptor for 5-hydroxytryptamine (serotonin). Also functions as a receptor for various drugs and psychoactive substances. Ligand binding causes a conformation change that triggers signaling via guanine nucleotide-binding proteins (G proteins) and modulates the activity of downstream effectors, such as adenylate cyclase. HTR1A is coupled to G(i)/G(o) G alpha proteins and mediates inhibitory neurotransmission: signaling inhibits adenylate cyclase activity and activates a phosphatidylinositol-calcium second messenger system that regulates the release of Ca(2+) ions from intracellular stores. Beta-arrestin family members regulate signaling by mediating both receptor desensitization and resensitization processes. The protein is 5-hydroxytryptamine receptor 1A (HTR1A) of Pongo pygmaeus (Bornean orangutan).